Reading from the N-terminus, the 278-residue chain is Thiazole synthase (278 aa).

The Schiff-base intermediate with DXP role is filled by Lys109. 1-deoxy-D-xylulose 5-phosphate is bound by residues Gly170, 197–198 (AG), and 219–220 (NT).

Belongs to the ThiG family. As to quaternary structure, homotetramer. Forms heterodimers with either ThiH or ThiS.

Its subcellular location is the cytoplasm. It carries out the reaction [ThiS sulfur-carrier protein]-C-terminal-Gly-aminoethanethioate + 2-iminoacetate + 1-deoxy-D-xylulose 5-phosphate = [ThiS sulfur-carrier protein]-C-terminal Gly-Gly + 2-[(2R,5Z)-2-carboxy-4-methylthiazol-5(2H)-ylidene]ethyl phosphate + 2 H2O + H(+). The protein operates within cofactor biosynthesis; thiamine diphosphate biosynthesis. Its function is as follows. Catalyzes the rearrangement of 1-deoxy-D-xylulose 5-phosphate (DXP) to produce the thiazole phosphate moiety of thiamine. Sulfur is provided by the thiocarboxylate moiety of the carrier protein ThiS. In vitro, sulfur can be provided by H(2)S. This chain is Thiazole synthase, found in Cupriavidus pinatubonensis (strain JMP 134 / LMG 1197) (Cupriavidus necator (strain JMP 134)).